The chain runs to 657 residues: Glycogen debranching enzyme (657 aa).

The Nucleophile role is filled by D336. Residue E371 is the Proton donor of the active site. A disordered region spans residues 460 to 479 (ANGEENRDGTNNNYSNNHGK).

The protein belongs to the glycosyl hydrolase 13 family.

It catalyses the reaction Hydrolysis of (1-&gt;6)-alpha-D-glucosidic linkages to branches with degrees of polymerization of three or four glucose residues in limit dextrin.. It functions in the pathway glycan degradation; glycogen degradation. Removes maltotriose and maltotetraose chains that are attached by 1,6-alpha-linkage to the limit dextrin main chain, generating a debranched limit dextrin. The polypeptide is Glycogen debranching enzyme (Escherichia coli O1:K1 / APEC).